A 1103-amino-acid polypeptide reads, in one-letter code: Long tail fiber protein Gp37 (1103 aa).

Residues 988–991 are interaction with the receptor-recognizing protein gp38; it reads DVYV. Residues 993 to 1091 form the Peptidase S74 domain; sequence SDIRVKKDLV…AEIAELKSEI (99 aa).

The protein belongs to the S16-like long tail fiber protein Gp37 family. In terms of assembly, homotrimer. Interacts with the receptor-recognizing protein Gp38. Post-translationally, proteolytic cleavage and release of the chaperone in the host cytosol stabilizes the folded protein.

Its subcellular location is the virion. Its function is as follows. Constitues the trimeric tip of the long tail fiber that mediates the attachment to the host receptor, together with the receptor-recognizing protein Gp38. The C-terminal chaperone protein mediates homotrimerization and proper folding of the catalytic trimer. In Escherichia coli O157:H7 (Bacteriophage AR1), this protein is Long tail fiber protein Gp37 (37).